Consider the following 1182-residue polypeptide: DNA-directed RNA polymerase subunit beta (1182 aa).

Residues 1150-1162 (DEEVEMKDEDDDN) are compositionally biased toward acidic residues. A disordered region spans residues 1150–1182 (DEEVEMKDEDDDNIPNATSALEQVVQPTVTEEE). Low complexity predominate over residues 1171 to 1182 (EQVVQPTVTEEE).

Belongs to the RNA polymerase beta chain family. The RNAP catalytic core consists of 2 alpha, 1 beta, 1 beta' and 1 omega subunit. When a sigma factor is associated with the core the holoenzyme is formed, which can initiate transcription.

The catalysed reaction is RNA(n) + a ribonucleoside 5'-triphosphate = RNA(n+1) + diphosphate. DNA-dependent RNA polymerase catalyzes the transcription of DNA into RNA using the four ribonucleoside triphosphates as substrates. The chain is DNA-directed RNA polymerase subunit beta from Exiguobacterium sp. (strain ATCC BAA-1283 / AT1b).